Consider the following 398-residue polypeptide: Protein-glutamate methylesterase/protein-glutamine glutaminase (398 aa).

Positions 4–121 (KVLVVDDSSF…ATNKDDAILL (118 aa)) constitute a Response regulatory domain. Asp55 bears the 4-aspartylphosphate mark. The disordered stretch occupies residues 133-200 (RMYRSSSLTP…SANPTTSSIS (68 aa)). 2 stretches are compositionally biased toward polar residues: residues 136–146 (RSSSLTPTSTI) and 168–200 (RLAS…SSIS). The CheB-type methylesterase domain occupies 205–398 (SGKQYKLLLI…EAILKESSRG (194 aa)). Residues Ser217, His244, and Asp340 contribute to the active site.

This sequence belongs to the CheB family. In terms of processing, phosphorylated by CheA. Phosphorylation of the N-terminal regulatory domain activates the methylesterase activity.

The protein resides in the cytoplasm. It carries out the reaction [protein]-L-glutamate 5-O-methyl ester + H2O = L-glutamyl-[protein] + methanol + H(+). The enzyme catalyses L-glutaminyl-[protein] + H2O = L-glutamyl-[protein] + NH4(+). Functionally, involved in chemotaxis. Part of a chemotaxis signal transduction system that modulates chemotaxis in response to various stimuli. Catalyzes the demethylation of specific methylglutamate residues introduced into the chemoreceptors (methyl-accepting chemotaxis proteins or MCP) by CheR. Also mediates the irreversible deamidation of specific glutamine residues to glutamic acid. This chain is Protein-glutamate methylesterase/protein-glutamine glutaminase, found in Shewanella frigidimarina (strain NCIMB 400).